A 114-amino-acid chain; its full sequence is Large ribosomal subunit protein bL20c (114 aa).

The protein belongs to the bacterial ribosomal protein bL20 family.

The protein localises to the plastid. It is found in the chloroplast. In terms of biological role, binds directly to 23S ribosomal RNA and is necessary for the in vitro assembly process of the 50S ribosomal subunit. It is not involved in the protein synthesizing functions of that subunit. In Trieres chinensis (Marine centric diatom), this protein is Large ribosomal subunit protein bL20c (rpl20).